The primary structure comprises 1127 residues: Testis-expressed protein 2 (1127 aa).

2 disordered regions span residues 1–27 (MTSL…HVQR) and 133–279 (AVSP…SFFK). The span at 133–187 (AVSPGSSSSGPLASSPSVSSLSEQKTSSSSPLSSPSKSPILSSSASTSTLSSAKP) shows a compositional bias: low complexity. A Phosphoserine modification is found at serine 196. The span at 249 to 275 (QFTQPRNTGGDSKTAPSSPLTSPSDTR) shows a compositional bias: polar residues. Threonine 262 bears the Phosphothreonine mark. 4 positions are modified to phosphoserine: serine 265, serine 266, serine 270, and serine 295. Residue asparagine 330 is glycosylated (N-linked (GlcNAc...) asparagine). The disordered stretch occupies residues 348–386 (EEECDSEGDGYGSDSNIPRSDHPKSTGEPTREIELKSSQ). Basic and acidic residues predominate over residues 366–382 (RSDHPKSTGEPTREIEL). 2 consecutive transmembrane segments (helical) span residues 475–495 (TLGF…PHYV) and 497–517 (GLFL…WFFT). Disordered regions lie at residues 648 to 685 (KAQT…QRDQ), 715 to 764 (KKSS…QKEL), 786 to 816 (QESR…PPSE), and 947 to 980 (DEES…GYVG). A compositionally biased stretch (basic and acidic residues) spans 650 to 670 (QTDKETSEEKPPAEGSEDPKK). A phosphoserine mark is found at serine 732, serine 738, serine 744, serine 748, serine 751, serine 798, and serine 815. The span at 735 to 750 (NSPSGHLTHSRSSSKG) shows a compositional bias: polar residues. Residues 787-804 (ESRSPQRSPLQSAESSPT) are compositionally biased toward polar residues. The SMP-LTD domain maps to 816–1101 (EEEEQEAWVN…MPNMDDVYIT (286 aa)). Residues 947–962 (DEESSSAGSSEEDDAP) are compositionally biased toward acidic residues.

It localises to the endoplasmic reticulum membrane. The protein resides in the nucleus membrane. Functionally, during endoplasmic reticulum (ER) stress or when cellular ceramide levels increase, may induce contacts between the ER and medial-Golgi complex to facilitate non-vesicular transport of ceramides from the ER to the Golgi complex where they are converted to complex sphingolipids, preventing toxic ceramide accumulation. This chain is Testis-expressed protein 2 (TEX2), found in Homo sapiens (Human).